The primary structure comprises 854 residues: MLMWPQPHLPTHPHLPTHPHLPTHPHLPTHPHLPTHPHLPTHPMMSKETRQSKLAEAKEQLTDHHPQTNPSVGTAASDTKKKKINNGTSPETTTSGGCHSPEDEQKASHQHQEALRRELEAQVHTIRILTCQKTELQMALYYSQHAVKQLEGEARDLISRLHDSWKFAGELEQALSAVTTQKKKADRYIEELTKERDALSLELYRNTITDEELKEKNAKLQEKLQLVESEKSEIQLNVKELKRKLERAKLLLPQQQLQAEADHLGKELQSVSAKLQAQVEENELWNRLNQQQEEKMWRQEEKIQEWEEKIQEQEEKIREQEEKIREQEEKMRRQEEMMWEKEEKMRRQEEMMWEKEEKIRELEEKMHEQEKIREQEEKRQEEEKIREQEKRQEQEAKMWRQEEKIREQEEKIREQEKKMWRQEEKIHEQEKIREEEKRQEQEEMWRQEEKIREQEEIWRQKEKMHEQEEKIRKQEEKVWRQEEKMHDQEEKIREQEEKVWRQEEKIREQEKKREQEEKMWRQEEKIREQEEKIREQEEMWREEEKMHEQEKIWEEEKRQEQEDKMWRQEEKIREQEEKVWRQEEKIREQEEKRQEQEEKMWKQEEKIREQEEKIREQEEKIREQEEKIREQEEMMQEQEEKMGEQEEKMQEQEKMRRQEEKIREQEEKIREQKEKIREQEEKIWEQEEKIREQEEMMQEQEEKMGEQEEKIWEQEEKMQEQEEKMRRQEEKIREQEKKIREQEEKIREQEEMMQEQEEKMGEQEEKMQEQEEKMRRQEEKIREQEKKIREQEEKIREQEEMMQEQEEKMWEQEEKMCEQEEKMQEQEEKMRRQEEKMWEQEVRLRQQEEKMQEH.

Disordered regions lie at residues 1 to 114 (MLMW…HQEA), 320 to 348 (QEEKIREQEEKMRRQEEMMWEKEEKMRRQ), 366 to 447 (MHEQ…MWRQ), 481 to 568 (QEEK…MWRQ), 581 to 681 (RQEE…EQEE), and 714 to 854 (QEEK…MQEH). A compositionally biased stretch (basic residues) spans 15-35 (LPTHPHLPTHPHLPTHPHLPT). Residues 45 to 66 (MSKETRQSKLAEAKEQLTDHHP) are compositionally biased toward basic and acidic residues. Polar residues-rich tracts occupy residues 67–77 (QTNPSVGTAAS) and 85–97 (NNGTSPETTTSGG). Residues 100 to 114 (SPEDEQKASHQHQEA) show a composition bias toward basic and acidic residues. Residues 103–854 (DEQKASHQHQ…RQQEEKMQEH (752 aa)) adopt a coiled-coil conformation.

It belongs to the GOLGA6 family.

This chain is Golgin subfamily A member 6-like protein 22, found in Homo sapiens (Human).